The chain runs to 401 residues: Chalcone synthase 5 (401 aa).

C168 is an active-site residue.

Belongs to the thiolase-like superfamily. Chalcone/stilbene synthases family.

It carries out the reaction (E)-4-coumaroyl-CoA + 3 malonyl-CoA + 3 H(+) = 2',4,4',6'-tetrahydroxychalcone + 3 CO2 + 4 CoA. Its pathway is secondary metabolite biosynthesis; flavonoid biosynthesis. Functionally, the primary product of this enzyme is 4,2',4',6'-tetrahydroxychalcone (also termed naringenin-chalcone or chalcone) which can under specific conditions spontaneously isomerize into naringenin. The sequence is that of Chalcone synthase 5 (CHS5) from Sorghum bicolor (Sorghum).